The chain runs to 308 residues: Glutaminase (308 aa).

Ser-66, Asn-117, Glu-161, Asn-168, Tyr-192, Tyr-244, and Val-262 together coordinate substrate.

This sequence belongs to the glutaminase family. As to quaternary structure, homotetramer.

The enzyme catalyses L-glutamine + H2O = L-glutamate + NH4(+). This chain is Glutaminase, found in Enterobacter sp. (strain 638).